Reading from the N-terminus, the 158-residue chain is Low molecular weight phosphotyrosine protein phosphatase (158 aa).

The residue at position 2 (Ala-2) is an N-acetylalanine. The active-site Nucleophile is Cys-13. Arg-19 is a catalytic residue. Asp-130 serves as the catalytic Proton donor. Phosphotyrosine occurs at positions 132 and 133.

Belongs to the low molecular weight phosphotyrosine protein phosphatase family. As to quaternary structure, interacts with EPHA2; dephosphorylates EPHA2. Interacts with EPHB1. Interacts with the SH3 domain of SPTAN1. Post-translationally, phosphorylated by LCK. Phosphorylation at Tyr-132 increases its phosphatase activity.

It localises to the cytoplasm. It catalyses the reaction O-phospho-L-tyrosyl-[protein] + H2O = L-tyrosyl-[protein] + phosphate. The enzyme catalyses a phosphate monoester + H2O = an alcohol + phosphate. Its activity is regulated as follows. Inhibited by sulfhydryl reagents. Its function is as follows. Acts on tyrosine phosphorylated proteins, low-MW aryl phosphates and natural and synthetic acyl phosphates with differences in substrate specificity between isoform 1 and isoform 2. This Sus scrofa (Pig) protein is Low molecular weight phosphotyrosine protein phosphatase (ACP1).